The chain runs to 1099 residues: SLIT-ROBO Rho GTPase-activating protein 3 (1099 aa).

Residues 19-314 enclose the F-BAR domain; sequence AQIKEIRTQL…AVDNLDSRSD (296 aa). Positions 352-392 form a coiled coil; it reads QTELLMRYHQLQSRLATLKIENEEVRKTLDATMQTLQDMLT. The disordered stretch occupies residues 470–493; it reads GERAECGTTRPPCLPPKPQKMRRP. Positions 506 to 694 constitute a Rho-GAP domain; sequence GSMEAFIKDS…TIIIHHEAIF (189 aa). Residues 744-803 enclose the SH3 domain; sequence VEQIEAIAKFDYVGRSPRELSFKKGASLLLYHRASEDWWEGRHNGVDGLIPHQYIVVQDM. Over residues 809–820 the composition is skewed to polar residues; that stretch reads DSLSQKADSEAS. A disordered region spans residues 809-846; that stretch reads DSLSQKADSEASSGPLLDDKASSKNDLQSPTEHISDYG. Residues Ser-817, Ser-820, Ser-821, Ser-837, and Ser-858 each carry the phosphoserine modification. Residues 861–911 form a disordered region; it reads AAIPRRRSGGDTHSPPRGLGPSIDTPPRAAACPSSPHKIPLSRGRIESPEK. Residues 952 to 987 are a coiled coil; sequence HKSLEAEALAEDIEKTMSTALHELRELERQNTVKQA. Ser-954 is modified (phosphoserine). Disordered regions lie at residues 994-1014 and 1045-1099; these read TLEP…SPLH and ARLA…SGTM. Positions 1060-1074 are enriched in low complexity; sequence VRPVVQHRSSSSSSS. Polar residues predominate over residues 1089–1099; the sequence is PNSSSDKSGTM.

Homodimer. Forms a heterooligomer with SRGAP1 and SRGAP2 through its F-BAR domain. Interacts with WASF1. Probably interacts with ROBO1. Interacts with FASLG.

Its function is as follows. GTPase-activating protein for RAC1 and perhaps CDC42, but not for RhoA small GTPase. May attenuate RAC1 signaling in neurons. This is SLIT-ROBO Rho GTPase-activating protein 3 (Srgap3) from Mus musculus (Mouse).